The sequence spans 214 residues: Threonylcarbamoyl-AMP synthase (214 aa).

In terms of domain architecture, YrdC-like spans 9–214 (TDSTIQAATW…GDALTGQVIR (206 aa)).

This sequence belongs to the SUA5 family. TsaC subfamily.

It localises to the cytoplasm. It carries out the reaction L-threonine + hydrogencarbonate + ATP = L-threonylcarbamoyladenylate + diphosphate + H2O. In terms of biological role, required for the formation of a threonylcarbamoyl group on adenosine at position 37 (t(6)A37) in tRNAs that read codons beginning with adenine. Catalyzes the conversion of L-threonine, HCO(3)(-)/CO(2) and ATP to give threonylcarbamoyl-AMP (TC-AMP) as the acyladenylate intermediate, with the release of diphosphate. This is Threonylcarbamoyl-AMP synthase from Psychrobacter cryohalolentis (strain ATCC BAA-1226 / DSM 17306 / VKM B-2378 / K5).